The primary structure comprises 112 residues: Ribosomal processing cysteine protease Prp (112 aa).

His22 acts as the Proton donor in catalysis. The active-site Nucleophile is the Cys34.

This sequence belongs to the Prp family. In terms of assembly, homodimer.

Its function is as follows. An essential cysteine protease that cleaves the N-terminus from ribosomal protein bL27. This is Ribosomal processing cysteine protease Prp from Bacillus subtilis (strain 168).